A 754-amino-acid polypeptide reads, in one-letter code: Phosphoinositide 3-kinase regulatory subunit 6 (754 aa).

Residues 343–363 (ERDLPTGADELPAPGSPEMER) are disordered.

In terms of assembly, heterodimer of a catalytic subunit (PIK3CG) and a regulatory (PIK3R6) subunit. The binding of PIK3R6 to PIK3CG may exclude the binding of PIK3R5 to PIK3CG. Interacts with beta-gamma G protein dimers. Interacts with PDE3B and RAPGEF3; form a signaling complex that regulates phosphatidylinositol 3-kinase gamma in angiogenesis.

It localises to the cytoplasm. The protein localises to the cell membrane. In terms of biological role, regulatory subunit of the PI3K gamma complex. Acts as an adapter to drive activation of PIK3CG by beta-gamma G protein dimers. The PIK3CG:PIK3R6 heterodimer is much less sensitive to beta-gamma G protein dimers than PIK3CG:PIK3R5 and its membrane recruitment and beta-gamma G protein dimer-dependent activation requires HRAS bound to PIK3CG. Recruits of the PI3K gamma complex to a PDE3B:RAPGEF3 signaling complex involved in angiogenesis; signaling seems to involve RRAS. The chain is Phosphoinositide 3-kinase regulatory subunit 6 (PIK3R6) from Homo sapiens (Human).